The following is a 546-amino-acid chain: DNA ligase (546 aa).

An ATP-binding site is contributed by E244. The active-site N6-AMP-lysine intermediate is K246. R251, R266, E295, F334, R405, and K411 together coordinate ATP.

Belongs to the ATP-dependent DNA ligase family. It depends on Mg(2+) as a cofactor.

It catalyses the reaction ATP + (deoxyribonucleotide)n-3'-hydroxyl + 5'-phospho-(deoxyribonucleotide)m = (deoxyribonucleotide)n+m + AMP + diphosphate.. Functionally, DNA ligase that seals nicks in double-stranded DNA during DNA replication, DNA recombination and DNA repair. The sequence is that of DNA ligase from Methanocorpusculum labreanum (strain ATCC 43576 / DSM 4855 / Z).